We begin with the raw amino-acid sequence, 272 residues long: MHLRLISWLFIILNFMEYIGSQNASRGRRQRRMHPNVSQGCQGGCATCSDYNGCLSCKPRLFFALERIGMKQIGVCLSSCPSGYYGTRYPDINKCTKCKADCDTCFNKNFCTKCKSGFYLHLGKCLDNCPEGLEANNHTMECVSIVHCEVSEWNPWSPCTKKGKTCGFKRGTETRVREIIQHPSAKGNLCPPTNETRKCTVQRKKCQKGERGKKGRERKRKKPNKGESKEAIPDSKSLESSKEIPEQRENKQQQKKRKVQDKQKSVSVSTVH.

Residues 1–21 (MHLRLISWLFIILNFMEYIGS) form the signal peptide. FU repeat units follow at residues 35 to 86 (PNVS…GYYG) and 92 to 135 (INKC…GLEA). The N-linked (GlcNAc...) asparagine glycan is linked to Asn36. Intrachain disulfides connect Cys41–Cys48, Cys45–Cys54, Cys57–Cys76, Cys80–Cys95, Cys98–Cys105, Cys102–Cys111, Cys114–Cys125, Cys129–Cys142, Cys148–Cys190, Cys159–Cys166, and Cys199–Cys206. In terms of domain architecture, TSP type-1 spans 147 to 207 (HCEVSEWNPW…KCTVQRKKCQ (61 aa)). The tract at residues 201–272 (VQRKKCQKGE…QKSVSVSTVH (72 aa)) is disordered. The segment covering 213-223 (KKGRERKRKKP) has biased composition (basic residues). Residues 224-252 (NKGESKEAIPDSKSLESSKEIPEQRENKQ) are compositionally biased toward basic and acidic residues.

The protein belongs to the R-spondin family. Interacts with the extracellular domain of FZD8 and LRP6. It however does not form a ternary complex with FZD8 and LRP6. Interacts with WNT1. Binds heparin. Interacts with LGR4, LGR5 and LGR6. As to expression, ubiquitously expressed. Expressed at higher level in placenta, small intestine, fetal thymus and lymph node. Highly expressed in endothelial cells.

The protein resides in the secreted. In terms of biological role, activator of the canonical Wnt signaling pathway by acting as a ligand for LGR4-6 receptors, which acts as a key regulator of angiogenesis. Upon binding to LGR4-6 (LGR4, LGR5 or LGR6), LGR4-6 associate with phosphorylated LRP6 and frizzled receptors that are activated by extracellular Wnt receptors, triggering the canonical Wnt signaling pathway to increase expression of target genes. Also regulates the canonical Wnt/beta-catenin-dependent pathway and non-canonical Wnt signaling by acting as an inhibitor of ZNRF3, an important regulator of the Wnt signaling pathway. Acts as a ligand for frizzled FZD8 and LRP6. May negatively regulate the TGF-beta pathway. Acts as a key regulator of angiogenesis by controlling vascular stability and pruning: acts by activating the non-canonical Wnt signaling pathway in endothelial cells. Can also amplify Wnt signaling pathway independently of LGR4-6 receptors, possibly by acting as a direct antagonistic ligand to RNF43 and ZNRF3. The sequence is that of R-spondin-3 (RSPO3) from Homo sapiens (Human).